The primary structure comprises 385 residues: MVKYISILGSTGSIGTSALDVVSAHPEHFKIVGLTANYNIELLEQQIKTFQPRIVSVATKELADTLRTRISTNTKITYGTDGLIAVATHPNSNLVLSSVVGVSGLLPTIEALKAKKDIAIANKETLVAAGHIVTELAKQNGCRLIPVDSEHSAIFQCLNGENNKEIDKLIVTASGGAFRDKTREEMKTLQAKDALKHPNWLMGAKLTIDSATLMNKGFEVMEARWLFDIPYEKINVMIHKESIIHSLVEFIDGSVIAQLGAPDMRMPIQYAFHYPTRLPSSYEKLNLLEIGSLHFEKPDLEKFPCLQYAYECGKIGGITPAVLNAANEIANALFLKNEIAFFDIEKTIYKTVEAHHNVKDPSLDAILEADQWARQYANQLLIKKS.

Residues Thr-11, Gly-12, Ser-13, Ile-14, Asn-39, and Asn-122 each contribute to the NADPH site. Lys-123 serves as a coordination point for 1-deoxy-D-xylulose 5-phosphate. Position 124 (Glu-124) interacts with NADPH. Residue Asp-148 participates in Mn(2+) binding. 1-deoxy-D-xylulose 5-phosphate contacts are provided by Ser-149, Glu-150, Ser-174, and His-197. Glu-150 lines the Mn(2+) pocket. An NADPH-binding site is contributed by Gly-203. 4 residues coordinate 1-deoxy-D-xylulose 5-phosphate: Ser-210, Asn-215, Lys-216, and Glu-219. Glu-219 contributes to the Mn(2+) binding site.

This sequence belongs to the DXR family. Mg(2+) is required as a cofactor. It depends on Mn(2+) as a cofactor.

The enzyme catalyses 2-C-methyl-D-erythritol 4-phosphate + NADP(+) = 1-deoxy-D-xylulose 5-phosphate + NADPH + H(+). It functions in the pathway isoprenoid biosynthesis; isopentenyl diphosphate biosynthesis via DXP pathway; isopentenyl diphosphate from 1-deoxy-D-xylulose 5-phosphate: step 1/6. Functionally, catalyzes the NADPH-dependent rearrangement and reduction of 1-deoxy-D-xylulose-5-phosphate (DXP) to 2-C-methyl-D-erythritol 4-phosphate (MEP). The chain is 1-deoxy-D-xylulose 5-phosphate reductoisomerase 1 from Bacillus anthracis.